The primary structure comprises 44 residues: Antimicrobial peptide 2 (44 aa).

In terms of processing, disulfide bonds. Expressed in flowers but not in leaves, seeds or roots (at protein level).

Functionally, antimicrobial peptide. Active against fungal species B.cinerea (IC(50)=5.2 uM), A.niger (IC(50)=2.6 uM) and B.sorokinina (IC(50)=5.2 uM) but not against F.oxysporum, F.graminearum and P.debaryanum at concentrations below 10 uM. Inhibits growth of P.infestans at concentration between 1.3 uM and 5.2 uM. Active against bacterial species P.syringae, B.subtilis, X.campestris and C.michiganense. This chain is Antimicrobial peptide 2, found in Taraxacum officinale (Common dandelion).